The sequence spans 354 residues: MGCAMSAEERAALARSKQIEKNLKEDGLQAAKDIKLLLLGAGESGKSTIVKQMKIIHESGFTAEDFKQYRPVVYSNTIQSLVAILRAMPNLGISFCNNERETDAKMVFDVIQRMEDTEPFSEELLAAMKRLWADSGVQECFGRSNEYQLNDSAKYFLDDLDRLGAKDYQPTEQDILRTRVKTTGIVEVHFSFKNLNFKLFDVGGQRSERKKWIHCFEDVTAIIFCVAMSEYDQVLHEDETTNRMQESLKLFDSICNNKWFTDTSIILFLNKKDLFEEKIKKSPLTICFPEYAGAQEYGEAAAYIQAQFEAKNKSTTKEIYCHMTCATDTNNIQFVFDAVTDVIIANNLRGCGLY.

Residue glycine 2 is the site of N-myristoyl glycine attachment. A lipid anchor (S-palmitoyl cysteine) is attached at cysteine 3. One can recognise a G-alpha domain in the interval 32 to 354 (KDIKLLLLGA…ANNLRGCGLY (323 aa)). The tract at residues 35 to 48 (KLLLLGAGESGKST) is G1 motif. GTP is bound by residues 40–47 (GAGESGKS), 176–182 (LRTRVKT), 201–205 (DVGGQ), 270–273 (NKKD), and alanine 326. Mg(2+) is bound by residues serine 47 and threonine 182. The segment at 174 to 182 (DILRTRVKT) is G2 motif. The G3 motif stretch occupies residues 197-206 (FKLFDVGGQR). The G4 motif stretch occupies residues 266–273 (ILFLNKKD). The segment at 324–329 (TCATDT) is G5 motif.

Belongs to the G-alpha family. G(i/o/t/z) subfamily. G proteins are composed of 3 units; alpha, beta and gamma. The alpha chain contains the guanine nucleotide binding site.

Guanine nucleotide-binding proteins (G proteins) are involved as modulators or transducers in various transmembrane signaling systems. The G(o) protein function is not clear. In Locusta migratoria (Migratory locust), this protein is Guanine nucleotide-binding protein G(o) subunit alpha.